The primary structure comprises 133 residues: Fluoride-specific ion channel FluC (133 aa).

4 helical membrane-spanning segments follow: residues 5 to 25 (VPAT…LGAL), 43 to 63 (VATL…YVVI), 76 to 96 (VIMI…IESL), and 108 to 128 (ISYV…AIVL). 2 residues coordinate Na(+): Gly83 and Thr86.

It belongs to the fluoride channel Fluc/FEX (TC 1.A.43) family.

Its subcellular location is the cell inner membrane. It carries out the reaction fluoride(in) = fluoride(out). Its activity is regulated as follows. Na(+) is not transported, but it plays an essential structural role and its presence is essential for fluoride channel function. In terms of biological role, fluoride-specific ion channel. Important for reducing fluoride concentration in the cell, thus reducing its toxicity. The polypeptide is Fluoride-specific ion channel FluC (Saccharophagus degradans (strain 2-40 / ATCC 43961 / DSM 17024)).